The chain runs to 477 residues: Ubiquinone biosynthesis monooxygenase COQ6, mitochondrial (477 aa).

The N-terminal 25 residues, 1–25 (MLGVLRIQGALASAGQARLLSVRLL), are a transit peptide targeting the mitochondrion.

It belongs to the UbiH/COQ6 family. In terms of assembly, component of a multi-subunit COQ enzyme complex. The cofactor is FAD.

It is found in the mitochondrion inner membrane. The enzyme catalyses a 4-hydroxy-3-(all-trans-polyprenyl)benzoate + 2 reduced [2Fe-2S]-[ferredoxin] + O2 + 2 H(+) = a 3,4-dihydroxy-5-(all-trans-polyprenyl)benzoate + 2 oxidized [2Fe-2S]-[ferredoxin] + H2O. It catalyses the reaction a 2-methoxy-6-(all-trans-polyprenyl)phenol + 2 reduced [2Fe-2S]-[ferredoxin] + O2 + 2 H(+) = a 2-methoxy-6-(all-trans-polyprenyl)benzene-1,4-diol + 2 oxidized [2Fe-2S]-[ferredoxin] + H2O. The protein operates within cofactor biosynthesis; ubiquinone biosynthesis. Functionally, FAD-dependent monooxygenase required for two non-consecutive steps during ubiquinone biosynthesis. Required for the C5-ring hydroxylation during ubiquinone biosynthesis by catalyzing the hydroxylation of 4-hydroxy-3-(all-trans-polyprenyl)benzoic acid to 3,4-dihydroxy-5-(all-trans-polyprenyl)benzoic acid. Also acts downstream of coq4, for the C1-hydroxylation during ubiquinone biosynthesis by catalyzing the hydroxylation of 2-methoxy-6-(all-trans-polyprenyl)phenol to 2-methoxy-6-(all-trans-polyprenyl)benzene-1,4-diol. The electrons required for the hydroxylation reaction are funneled indirectly to Coq6 from NADPH via a ferredoxin/ferredoxin reductase system. The chain is Ubiquinone biosynthesis monooxygenase COQ6, mitochondrial from Drosophila melanogaster (Fruit fly).